Here is a 72-residue protein sequence, read N- to C-terminus: MKLTCVVIVAVLLLTACQLITADDSRGTQEHRALRSDTKLSMLTLRCESYGKPCGIYNDCCNACDPAKKTCT.

Positions 1–22 are cleaved as a signal peptide; it reads MKLTCVVIVAVLLLTACQLITA. A propeptide spanning residues 23 to 46 is cleaved from the precursor; that stretch reads DDSRGTQEHRALRSDTKLSMLTLR. 3 cysteine pairs are disulfide-bonded: Cys47–Cys61, Cys54–Cys64, and Cys60–Cys71.

It belongs to the conotoxin O1 superfamily. As to expression, expressed by the venom duct.

Its subcellular location is the secreted. The sequence is that of Conotoxin 3 from Conus striatus (Striated cone).